A 316-amino-acid polypeptide reads, in one-letter code: RNA interference defective protein 11 (316 aa).

An RING-type; degenerate zinc finger spans residues cysteine 183–cysteine 218.

In terms of assembly, interacts (via RING-type zinc finger domain) with rde-10.

In terms of biological role, in complex with rde-10, required in the endogenous and exogenous siRNA pathway for biogenesis and accumulation of secondary small interfering RNA (siRNA) intermediates, such as 22G-siRNAs derived from ergo-1 targets. The chain is RNA interference defective protein 11 from Caenorhabditis elegans.